We begin with the raw amino-acid sequence, 78 residues long: Small integral membrane protein 1 (78 aa).

Position 1 is an N-acetylmethionine (methionine 1). The segment covering 1-18 has biased composition (basic and acidic residues); that stretch reads MQPQESHVHYSRWEDGSR. The interval 1-20 is disordered; sequence MQPQESHVHYSRWEDGSRDG. Residues 1–46 lie on the Cytoplasmic side of the membrane; sequence MQPQESHVHYSRWEDGSRDGVSLGAVSSTEEASRCRRISQRLCTGK. Serine 6, serine 17, serine 22, and serine 27 each carry phosphoserine. A helical; Signal-anchor for type II membrane protein membrane pass occupies residues 47–67; it reads LGIAMKVLGGVALFWIIFILG. Residues 68–78 lie on the Extracellular side of the membrane; it reads YLTGYYVHKCK. The segment at 68–78 is displays the Vel antigen; that stretch reads YLTGYYVHKCK.

This sequence belongs to the SMIM1 family. As to quaternary structure, homooligomer; disulfide-linked. As to expression, highly expressed in the bone marrow and expressed at lower levels in non-hematopoietic tissues. Highly expressed in erythroleukemia cell lines. Up-regulated in CD34+ hematopoietic progenitors cultured toward red blood cells.

Its subcellular location is the cell membrane. Functionally, regulator of red blood cell formation. This is Small integral membrane protein 1 from Homo sapiens (Human).